We begin with the raw amino-acid sequence, 898 residues long: Sodium/hydrogen exchanger 5 (898 aa).

Topologically, residues 1-48 (MLSAALLLLPGLPLAGAGATEEPTQESGPLGEPPPGLALFRWQWHEVE) are cytoplasmic. Residues 49–69 (APYLVALWILVASLAKIVFHL) form a helical membrane-spanning segment. Topologically, residues 70-76 (SRKVTSL) are extracellular. A helical transmembrane segment spans residues 77–97 (VPESCLLILLGLVLGGIVLAV). Topologically, residues 98-106 (AKKAEYQLE) are cytoplasmic. The helical transmembrane segment at 107-127 (PGTFFLFLLPPIVLDSGYFMP) threads the bilayer. The Extracellular segment spans residues 128-137 (SRLFFDNLGA). Residues 138–158 (ILTYAVVGTLWNAFTTGVALW) traverse the membrane as a helical segment. Over 159–176 (GLQQAGLVAPRVQAGLLD) the chain is Cytoplasmic. The chain crosses the membrane as a helical span at residues 177–197 (FLLFGSLISAVDPVAVLAVFE). Topologically, residues 198 to 203 (EVHVNQ) are extracellular. The helical transmembrane segment at 204-224 (TLFIIIFGESLLNDAVTVVLY) threads the bilayer. The Cytoplasmic segment spans residues 225–249 (KVCNSFVEMGSANVQATDYLKGVAS). The helical transmembrane segment at 250–270 (LFVVSLGGAAVGLVFAFLLAL) threads the bilayer. At 271–279 (TTRFTKRVR) the chain is on the extracellular side. Residues 280-300 (IIEPLLVFLLAYAAYLTAEMA) form a helical membrane-spanning segment. Residues 301 to 334 (SLSAILAVTMCGLGCKKYVEANISHKSRTAVKYT) are Cytoplasmic-facing. The chain crosses the membrane as a helical span at residues 335 to 355 (MKTLASCAETVIFMLLGISAV). Over 356–363 (DSSKWAWD) the chain is Extracellular. The helical transmembrane segment at 364 to 384 (SGLVLGTLFFILFFRALGVVL) threads the bilayer. The Cytoplasmic segment spans residues 385-401 (QTWALNQFRLVPLDKID). The chain crosses the membrane as a helical span at residues 402–422 (QVVMSYGGLRGAVAFALVILL). Residues 423 to 431 (DRTKVPAKD) are Extracellular-facing. The chain crosses the membrane as a helical span at residues 432–452 (YFVATTIVVVFFTVIVQGLTI). The Cytoplasmic portion of the chain corresponds to 453–898 (KPLVKWLRVK…CIQFNRGGRL (446 aa)). 2 disordered regions span residues 660-693 (FTKS…RDLG) and 826-866 (EEPQ…PQQE). Over residues 663–675 (SKPRPRKTSHKKK) the composition is skewed to basic residues. The segment covering 857 to 866 (ESSADIPQQE) has biased composition (polar residues).

It belongs to the monovalent cation:proton antiporter 1 (CPA1) transporter (TC 2.A.36) family. As to quaternary structure, interacts with CHP1 and CHP2. Interacts with ARRB2; facilitates the endocytosis of SLC9A5 from the plasma membrane. Interacts with RACK1; this interaction positively regulates SLC9A5 activity and promote SLC9A5 localization to focal adhesions. Interacts with SCAMP2; this interaction regulates SLC9A5 cell-surface targeting and SLC9A5 activity. Post-translationally, phosphorylated by PRKAA2; promotes its accumulation at the cell surface. Phosphorylated by CSNK2A1 in a manner favoring its beta-arrestin binding and endocytosis. As to expression, highest expression level is detected in brain. Expressed in hippocampal neurons (at protein level).

The protein localises to the cell membrane. Its subcellular location is the recycling endosome membrane. The protein resides in the cell projection. It is found in the dendritic spine membrane. It localises to the synaptic cell membrane. The protein localises to the cell junction. Its subcellular location is the focal adhesion. It carries out the reaction Na(+)(in) + H(+)(out) = Na(+)(out) + H(+)(in). Functionally, plasma membrane Na(+)/H(+) antiporter. Mediates the electroneutral exchange of intracellular H(+) ions for extracellular Na(+) in 1:1 stoichiometry. Responsible for regulating intracellular pH homeostasis, in particular in neural tissues. Acts as a negative regulator of dendritic spine growth. Plays a role in postsynaptic remodeling and signaling. Can also contribute to organellar pH regulation, with consequences for receptor tyrosine kinase trafficking. This chain is Sodium/hydrogen exchanger 5 (Slc9a5), found in Mus musculus (Mouse).